Here is a 240-residue protein sequence, read N- to C-terminus: Superoxide dismutase [Cu-Zn] (240 aa).

The first 32 residues, 1–32 (MPKPADHRNHAAVSTSVLSALFLGAGAALLSA), serve as a signal peptide directing secretion. Residue Cys-33 is the site of N-palmitoyl cysteine attachment. The S-diacylglycerol cysteine moiety is linked to residue Cys-33. Composition is skewed to polar residues over residues 36 to 51 (PQHA…SIWT) and 68 to 77 (GAQSLTSTLT). The tract at residues 36 to 77 (PQHASTVPGTTPSIWTGSPAPSGLSGHDEESPGAQSLTSTLT) is disordered. Cu cation-binding residues include His-116 and His-118. Cysteines 123 and 234 form a disulfide. Zn(2+) is bound by residues His-146 and Asp-158. His-195 serves as a coordination point for Cu cation.

The protein belongs to the Cu-Zn superoxide dismutase family. Cu cation is required as a cofactor. Zn(2+) serves as cofactor.

It is found in the cell membrane. The catalysed reaction is 2 superoxide + 2 H(+) = H2O2 + O2. With respect to regulation, inhibited by the copper chelator diethyl dithiocarbamate. Functionally, destroys radicals which are normally produced within the cells and which are toxic to biological systems. May play a role in favoring mycobacterial survival in phagocytes. The polypeptide is Superoxide dismutase [Cu-Zn] (sodC) (Mycobacterium bovis (strain ATCC BAA-935 / AF2122/97)).